A 287-amino-acid polypeptide reads, in one-letter code: Ribonuclease HII (287 aa).

The 227-residue stretch at 61-287 (ALQIGVDEAG…FAPVRKALES (227 aa)) folds into the RNase H type-2 domain. Residues aspartate 67, glutamate 68, and aspartate 186 each contribute to the a divalent metal cation site.

Belongs to the RNase HII family. Mn(2+) is required as a cofactor. It depends on Mg(2+) as a cofactor.

It is found in the cytoplasm. It catalyses the reaction Endonucleolytic cleavage to 5'-phosphomonoester.. Endonuclease that specifically degrades the RNA of RNA-DNA hybrids. The polypeptide is Ribonuclease HII (Psychrobacter arcticus (strain DSM 17307 / VKM B-2377 / 273-4)).